Consider the following 610-residue polypeptide: Major facilitator superfamily multidrug transporter FLU1 (610 aa).

Residues asparagine 3 and asparagine 21 are each glycosylated (N-linked (GlcNAc...) asparagine). Residues 47-58 (GPTDSVESSSNT) are compositionally biased toward polar residues. Residues 47–74 (GPTDSVESSSNTADEENEINSFNAQNVK) are disordered. Helical transmembrane passes span 165–185 (ILYC…SAMF), 209–229 (LFVF…ELFG), 231–251 (KLVM…VATA), 262–282 (FFAG…MADM), 292–312 (IAIF…LGAF), 323–343 (WTSY…TFLL), 408–428 (AFIY…FLGE), 437–457 (ELPY…IMLF), 478–498 (LEPM…LGWT), 507–527 (WIVP…IFLP), and 530–550 (NYII…NTFI). Asparagine 568 carries N-linked (GlcNAc...) asparagine glycosylation. Residues 573 to 593 (WASTLLGCIGILLLPMPFVFY) form a helical membrane-spanning segment.

The protein belongs to the major facilitator superfamily. DHA1 family. Polyamines/proton antiporter (TC 2.A.1.2.16) subfamily.

Its subcellular location is the cell membrane. Major facilitator superfamily transporter that mediates resistance to structurally and functionally unrelated compounds including cycloheximide but also azoles such as fuconazole, ketoconazole and itraconazole. Also mediates efflux of histatin 5, a salivary human antimicrobial peptide, and is responsible for reduction of its toxicity in C.albicans. This Candida albicans (strain SC5314 / ATCC MYA-2876) (Yeast) protein is Major facilitator superfamily multidrug transporter FLU1.